Consider the following 234-residue polypeptide: 2-amino-5-formylamino-6-ribosylaminopyrimidin-4(3H)-one 5'-monophosphate deformylase (234 aa).

Fe cation contacts are provided by glutamate 29, histidine 31, aspartate 40, and histidine 109.

The protein belongs to the creatininase superfamily. FAPy deformylase family. As to quaternary structure, homodimer. Requires Fe(2+) as cofactor. It depends on Zn(2+) as a cofactor.

It catalyses the reaction 2-amino-5-formylamino-6-(5-phospho-D-ribosylamino)pyrimidin-4(3H)-one + H2O = 2,5-diamino-6-(1-D-ribosylamino)pyrimidin-4(3H)-one 5'-phosphate + formate + H(+). It functions in the pathway cofactor biosynthesis; coenzyme F420 biosynthesis. Its pathway is cofactor biosynthesis; riboflavin biosynthesis. In terms of biological role, catalyzes the hydrolysis of the formamide of 2-amino-5-formylamino-6-ribosylamino-4(3H)-pyrimidinone 5'-monophosphate (FAPy) to form 2,5-diamino-6-ribosylamino-4(3H)-pyrimidinone 5'-phosphate (APy). This is 2-amino-5-formylamino-6-ribosylaminopyrimidin-4(3H)-one 5'-monophosphate deformylase from Methanobrevibacter ruminantium (strain ATCC 35063 / DSM 1093 / JCM 13430 / OCM 146 / M1) (Methanobacterium ruminantium).